We begin with the raw amino-acid sequence, 379 residues long: tRNA-specific 2-thiouridylase MnmA (379 aa).

ATP-binding positions include 23–30 and L49; that span reads AMSGGVDS. C117 (nucleophile) is an active-site residue. A disulfide bridge connects residues C117 and C214. An ATP-binding site is contributed by G141. The interaction with tRNA stretch occupies residues 163-165; the sequence is RDQ. C214 acts as the Cysteine persulfide intermediate in catalysis.

The protein belongs to the MnmA/TRMU family.

It localises to the cytoplasm. It catalyses the reaction S-sulfanyl-L-cysteinyl-[protein] + uridine(34) in tRNA + AH2 + ATP = 2-thiouridine(34) in tRNA + L-cysteinyl-[protein] + A + AMP + diphosphate + H(+). Its function is as follows. Catalyzes the 2-thiolation of uridine at the wobble position (U34) of tRNA, leading to the formation of s(2)U34. This is tRNA-specific 2-thiouridylase MnmA from Cereibacter sphaeroides (strain ATCC 17029 / ATH 2.4.9) (Rhodobacter sphaeroides).